A 602-amino-acid chain; its full sequence is Leucine-rich repeat-containing protein 40 (602 aa).

At S71 the chain carries Phosphoserine. LRR repeat units lie at residues 83-104, 106-127, 129-150, 152-173, 175-196, 198-219, 221-242, 244-265, 266-286, 290-311, 313-335, 336-356, 400-421, 426-447, 450-472, 473-494, 496-517, 519-540, 543-564, and 566-586; these read DLTK…LRLL, ALTV…IREL, NLQK…ITNL, NLKC…FEQL, NLED…FSSL, SLVR…INRM, RLKH…LAGM, SLEL…PSCS, LLKE…EHLK, SILV…IILL, SLER…GNLH, LKFL…IISK, TLKI…VFDA, IVTS…MVEL, MVSD…CVLQ, KLTF…MESL, RLQT…LYRI, TLET…KMKM, NLTT…LGNC, and NLRT…AILM.

The chain is Leucine-rich repeat-containing protein 40 (LRRC40) from Homo sapiens (Human).